Here is a 313-residue protein sequence, read N- to C-terminus: Olfactory receptor 51A2 (313 aa).

Residues Met1–Ile27 lie on the Extracellular side of the membrane. Residue Asn5 is glycosylated (N-linked (GlcNAc...) asparagine). A helical membrane pass occupies residues Trp28–Leu48. Residues Phe49–Ser56 lie on the Cytoplasmic side of the membrane. Residues Leu57 to Leu77 form a helical membrane-spanning segment. Topologically, residues Ser78–Ala101 are extracellular. Cys99 and Cys191 are joined by a disulfide. The chain crosses the membrane as a helical span at residues Gln102 to Phe122. Residues Asp123–Val141 are Cytoplasmic-facing. Residues Arg142 to Pro162 form a helical membrane-spanning segment. Over Phe163–Val198 the chain is Extracellular. A helical membrane pass occupies residues Ile199–Ser218. Residues Tyr219 to Ala238 lie on the Cytoplasmic side of the membrane. A helical membrane pass occupies residues Leu239–Leu259. Residues Ala260 to Asn274 lie on the Extracellular side of the membrane. A helical transmembrane segment spans residues Val275–Val295. The Cytoplasmic portion of the chain corresponds to Lys296–Ile313.

Belongs to the G-protein coupled receptor 1 family.

It localises to the cell membrane. Functionally, odorant receptor. This chain is Olfactory receptor 51A2 (OR51A2), found in Homo sapiens (Human).